Reading from the N-terminus, the 341-residue chain is Serine proteinase inhibitor 2 (341 aa).

This sequence belongs to the serpin family. Poxviruses subfamily.

Its subcellular location is the host cytoplasm. In terms of biological role, viral serpin that inhibits both cysteine and serine proteinases involved in the regulation of host inflammatory and apoptosis processes. Major anti-apoptotic protein which inhibits both intrinsic and extrinsic pathways and strongly cleaves host CASP1 and CASP8 but is a rather poor inhibitor of host CASP3. Prevents the proteolytic activity of host interleukin-1-beta converting enzyme (ICE) and ICE-like enzymes. Can also block apoptosis through host tumor necrosis factor (TNF) receptor. This is Serine proteinase inhibitor 2 (OPG199) from Bos taurus (Bovine).